We begin with the raw amino-acid sequence, 183 residues long: Non-specific lipid transfer protein GPI-anchored 15 (183 aa).

The first 24 residues, 1–24, serve as a signal peptide directing secretion; sequence MGYRRSYAITFVALVAALWSVTKA. 4 disulfide bridges follow: C30/C71, C40/C55, C56/C97, and C69/C107. N-linked (GlcNAc...) asparagine glycans are attached at residues N47 and N86. A disordered region spans residues 108 to 158; the sequence is NAATGPTAQPPAPSPTEKTPDVTLTPTSLPGARSGVGGGSKTVPSVGTGSS. Positions 149 to 158 are enriched in polar residues; that stretch reads TVPSVGTGSS. S158 carries the GPI-anchor amidated serine lipid modification. The propeptide at 159–183 is removed in mature form; sequence SRNVDPLPLHFLMFAVLVVCTSSFL.

The protein belongs to the plant LTP family. In terms of tissue distribution, expressed in seedlings, preferentially in the endodermis of hypocotyls and roots. Also observed in siliques.

It is found in the cell membrane. In terms of biological role, probable lipid transfer protein. This is Non-specific lipid transfer protein GPI-anchored 15 from Arabidopsis thaliana (Mouse-ear cress).